The sequence spans 200 residues: Holliday junction branch migration complex subunit RuvA (200 aa).

The interval 1–63 is domain I; sequence MIALVQGRVA…EDSLTLFGFA (63 aa). Residues 64–138 are domain II; the sequence is DADERDVFEL…DRLGPAQGAA (75 aa). Residues 138–142 form a flexible linker region; sequence APAAP. The tract at residues 143-200 is domain III; sequence VAVDDGADVVDALVGLGWPVRQAQDAVRGVLEDADGTAPDAAGLLRAALRSLAGDARG.

This sequence belongs to the RuvA family. Homotetramer. Forms an RuvA(8)-RuvB(12)-Holliday junction (HJ) complex. HJ DNA is sandwiched between 2 RuvA tetramers; dsDNA enters through RuvA and exits via RuvB. An RuvB hexamer assembles on each DNA strand where it exits the tetramer. Each RuvB hexamer is contacted by two RuvA subunits (via domain III) on 2 adjacent RuvB subunits; this complex drives branch migration. In the full resolvosome a probable DNA-RuvA(4)-RuvB(12)-RuvC(2) complex forms which resolves the HJ.

Its subcellular location is the cytoplasm. The RuvA-RuvB-RuvC complex processes Holliday junction (HJ) DNA during genetic recombination and DNA repair, while the RuvA-RuvB complex plays an important role in the rescue of blocked DNA replication forks via replication fork reversal (RFR). RuvA specifically binds to HJ cruciform DNA, conferring on it an open structure. The RuvB hexamer acts as an ATP-dependent pump, pulling dsDNA into and through the RuvAB complex. HJ branch migration allows RuvC to scan DNA until it finds its consensus sequence, where it cleaves and resolves the cruciform DNA. This Beutenbergia cavernae (strain ATCC BAA-8 / DSM 12333 / CCUG 43141 / JCM 11478 / NBRC 16432 / NCIMB 13614 / HKI 0122) protein is Holliday junction branch migration complex subunit RuvA.